Here is a 212-residue protein sequence, read N- to C-terminus: Thymidylate kinase (212 aa).

10–17 (GPEGAGKT) lines the ATP pocket.

This sequence belongs to the thymidylate kinase family.

It carries out the reaction dTMP + ATP = dTDP + ADP. Its function is as follows. Phosphorylation of dTMP to form dTDP in both de novo and salvage pathways of dTTP synthesis. This Bacillus licheniformis (strain ATCC 14580 / DSM 13 / JCM 2505 / CCUG 7422 / NBRC 12200 / NCIMB 9375 / NCTC 10341 / NRRL NRS-1264 / Gibson 46) protein is Thymidylate kinase.